A 556-amino-acid chain; its full sequence is U3 small nucleolar RNA-associated protein 18 homolog (556 aa).

Over residues 1 to 24 the composition is skewed to basic residues; it reads MPPERRRRMKLDRRTGAKPKRKPG. The interval 1–70 is disordered; that stretch reads MPPERRRRMK…IAVAAAEEER (70 aa). Positions 43 to 65 are enriched in low complexity; that stretch reads APSSQRKPPARPSAAAAAIAVAA. A Glycyl lysine isopeptide (Lys-Gly) (interchain with G-Cter in SUMO2) cross-link involves residue Lys-84. Residues 111–143 form a disordered region; it reads RGPRVQEHEDSGDSEVENEAKGNFPPQKKPVWV. Phosphoserine occurs at positions 121 and 124. Glycyl lysine isopeptide (Lys-Gly) (interchain with G-Cter in SUMO2) cross-links involve residues Lys-183 and Lys-201. Residues 193-219 form a disordered region; it reads VPAWAETTKRKTSSDDESEEDEDDLLQ. Position 204 is a phosphothreonine (Thr-204). Phosphoserine occurs at positions 205, 206, and 210. The segment covering 207–216 has biased composition (acidic residues); that stretch reads DDESEEDEDD. Thr-221 is subject to Phosphothreonine. WD repeat units lie at residues 249–288, 293–333, 339–380, 381–419, 421–462, and 471–512; these read PTVA…NPKI, LERF…LIPV, LKEK…GSMK, INGR…CLNR, VDEG…QETN, and NLVT…VFSN. Lys-517 participates in a covalent cross-link: Glycyl lysine isopeptide (Lys-Gly) (interchain with G-Cter in SUMO2).

It belongs to the WD repeat UTP18 family. In terms of assembly, part of the small subunit (SSU) processome, composed of more than 70 proteins and the RNA chaperone small nucleolar RNA (snoRNA) U3.

Its subcellular location is the nucleus. The protein resides in the nucleolus. Functionally, part of the small subunit (SSU) processome, first precursor of the small eukaryotic ribosomal subunit. During the assembly of the SSU processome in the nucleolus, many ribosome biogenesis factors, an RNA chaperone and ribosomal proteins associate with the nascent pre-rRNA and work in concert to generate RNA folding, modifications, rearrangements and cleavage as well as targeted degradation of pre-ribosomal RNA by the RNA exosome. Involved in nucleolar processing of pre-18S ribosomal RNA. In Homo sapiens (Human), this protein is U3 small nucleolar RNA-associated protein 18 homolog.